Here is a 227-residue protein sequence, read N- to C-terminus: Large ribosomal subunit protein uL3 (227 aa).

Glutamine 151 is modified (N5-methylglutamine).

Belongs to the universal ribosomal protein uL3 family. In terms of assembly, part of the 50S ribosomal subunit. Forms a cluster with proteins L14 and L19. Methylated by PrmB.

One of the primary rRNA binding proteins, it binds directly near the 3'-end of the 23S rRNA, where it nucleates assembly of the 50S subunit. This chain is Large ribosomal subunit protein uL3, found in Gluconobacter oxydans (strain 621H) (Gluconobacter suboxydans).